A 101-amino-acid polypeptide reads, in one-letter code: Small ribosomal subunit protein uS10 (101 aa).

The protein belongs to the universal ribosomal protein uS10 family. In terms of assembly, part of the 30S ribosomal subunit.

Functionally, involved in the binding of tRNA to the ribosomes. This chain is Small ribosomal subunit protein uS10, found in Flavobacterium psychrophilum (strain ATCC 49511 / DSM 21280 / CIP 103535 / JIP02/86).